A 109-amino-acid chain; its full sequence is CRISPR-associated endoribonuclease Cas2 (109 aa).

Mg(2+) is bound at residue Asp8.

Belongs to the CRISPR-associated endoribonuclease Cas2 protein family. In terms of assembly, homodimer, forms a heterotetramer with a Cas1 homodimer. It depends on Mg(2+) as a cofactor.

Functionally, CRISPR (clustered regularly interspaced short palindromic repeat), is an adaptive immune system that provides protection against mobile genetic elements (viruses, transposable elements and conjugative plasmids). CRISPR clusters contain sequences complementary to antecedent mobile elements and target invading nucleic acids. CRISPR clusters are transcribed and processed into CRISPR RNA (crRNA). Functions as a ssRNA-specific endoribonuclease. Involved in the integration of spacer DNA into the CRISPR cassette. This is CRISPR-associated endoribonuclease Cas2 from Streptococcus mutans serotype c (strain ATCC 700610 / UA159).